The chain runs to 167 residues: 6,7-dimethyl-8-ribityllumazine synthase (167 aa).

5-amino-6-(D-ribitylamino)uracil contacts are provided by residues Phe24, 58 to 60 (ALE), and 82 to 84 (AVV). Position 87–88 (87–88 (ET)) interacts with (2S)-2-hydroxy-3-oxobutyl phosphate. His90 functions as the Proton donor in the catalytic mechanism. Position 115 (Asn115) interacts with 5-amino-6-(D-ribitylamino)uracil. (2S)-2-hydroxy-3-oxobutyl phosphate is bound at residue Arg129.

The protein belongs to the DMRL synthase family.

The catalysed reaction is (2S)-2-hydroxy-3-oxobutyl phosphate + 5-amino-6-(D-ribitylamino)uracil = 6,7-dimethyl-8-(1-D-ribityl)lumazine + phosphate + 2 H2O + H(+). It participates in cofactor biosynthesis; riboflavin biosynthesis; riboflavin from 2-hydroxy-3-oxobutyl phosphate and 5-amino-6-(D-ribitylamino)uracil: step 1/2. In terms of biological role, catalyzes the formation of 6,7-dimethyl-8-ribityllumazine by condensation of 5-amino-6-(D-ribitylamino)uracil with 3,4-dihydroxy-2-butanone 4-phosphate. This is the penultimate step in the biosynthesis of riboflavin. This chain is 6,7-dimethyl-8-ribityllumazine synthase, found in Cupriavidus pinatubonensis (strain JMP 134 / LMG 1197) (Cupriavidus necator (strain JMP 134)).